The sequence spans 83 residues: Erabutoxin b (83 aa).

The first 21 residues, 1 to 21 (MKTLLLTLVVVTIVCLDLGYT), serve as a signal peptide directing secretion. The loop I stretch occupies residues 24–38 (CFNHQSSQPQTTKTC). 4 disulfide bridges follow: Cys-24/Cys-45, Cys-38/Cys-62, Cys-64/Cys-75, and Cys-76/Cys-81. The tract at residues 39-44 (SPGESS) is stretch between loop I and loop II. Residues 45–62 (CYHKQWSDFRGTIIERGC) are loop II. Residues 64 to 75 (CPTVKPGIKLSC) are loop III.

The protein belongs to the three-finger toxin family. Short-chain subfamily. Type I alpha-neurotoxin sub-subfamily. Expressed by the venom gland.

It is found in the secreted. Functionally, binds with high affinity to muscular nicotinic acetylcholine receptors (nAChRs) (tested on Torpedo marmorata, Kd=0.07 nM), and with low affinity to neuronal alpha-7/CHRNA7 nAChRs (tested on chimeric alpha-7/CHRNA7, Kd=22 uM) and inhibit acetylcholine from binding to the receptor, thereby impairing neuromuscular transmission. Produces peripheral paralysis by blocking neuromuscular transmission at the postsynaptic site. The chain is Erabutoxin b from Laticauda semifasciata (Black-banded sea krait).